Reading from the N-terminus, the 229-residue chain is DNA mismatch repair protein MutH (229 aa).

This sequence belongs to the MutH family.

It is found in the cytoplasm. In terms of biological role, sequence-specific endonuclease that cleaves unmethylated GATC sequences. It is involved in DNA mismatch repair. In Escherichia coli O17:K52:H18 (strain UMN026 / ExPEC), this protein is DNA mismatch repair protein MutH.